Reading from the N-terminus, the 274-residue chain is Transcription factor Ovo-like 2 (274 aa).

Residues 1 to 11 (MPKVFLVKRRS) are compositionally biased toward basic residues. Positions 1–88 (MPKVFLVKRR…ETPELHDAQG (88 aa)) are disordered. A compositionally biased stretch (basic and acidic residues) spans 18–29 (SWDELPDDKRAD). A compositionally biased stretch (low complexity) spans 50 to 74 (DGGSSSGCSSSAGEPGGAESSSSPR). 4 C2H2-type zinc fingers span residues 118–140 (HNCDLCGKSFRLQRMLNRHLKCH), 146–168 (HLCTFCGKGFNDTFDLKRHVRTH), 174–197 (YKCEVCNKAFTQRCSLESHLKKIH), and 213–236 (YVCEDCGYTGPTQEDLYLHVNSDH). S268 carries the post-translational modification Phosphoserine.

It belongs to the krueppel C2H2-type zinc-finger protein family. Interacts (via zinc-finger domains) with CEBPA (via bZIP domain); the interaction inhibits the transcription factor activity of CEBPA and is required to repress adipogenesis. Expressed highly in testis, specifically in spermatocytes. Expressed also in skin and at lower levels in the ovary. Expressed in adipose tissues. Expression is lower than in testis and a relatively higher expression level is detected in the stromal vascular fraction (SVF) than in fat cells themselves.

The protein localises to the nucleus. Its function is as follows. Zinc-finger transcription repressor factor. Plays a critical role in maintaining the identity of epithelial lineages by suppressing epithelial-to mesenchymal transition (EMT) mainly through the repression of ZEB1, an EMT inducer. Positively regulates neuronal differentiation. Suppresses cell cycling and terminal differentiation of keratinocytes by directly repressing MYC and NOTCH1. Important for the correct development of primordial germ cells in embryos. Plays dual functions in thermogenesis and adipogenesis to maintain energy balance. Essential for brown/beige adipose tissue-mediated thermogenesis, is necessary for the development of brown adipocytes. In white adipose tissues, limits adipogenesis by blocking CEBPA binding to its transcriptional targets and inhibiting its transcription factor activity. This is Transcription factor Ovo-like 2 from Mus musculus (Mouse).